The sequence spans 335 residues: Pregnancy-specific beta-1-glycoprotein 2 (335 aa).

Positions 1–34 are cleaved as a signal peptide; sequence MGPLSAPPCTEHIKWKGLLVTASLLNFWNLPTTA. The region spanning 35–144 is the Ig-like V-type domain; the sequence is QVTIEAQPPK…TGYFTFTLYL (110 aa). Residues N61, N104, N111, and N199 are each glycosylated (N-linked (GlcNAc...) asparagine). Ig-like C2-type domains are found at residues 147–234 and 239–317; these read PKPS…VTLN and PDLP…TSLT. Intrachain disulfides connect C169–C217 and C261–C301.

This sequence belongs to the immunoglobulin superfamily. CEA family.

Its subcellular location is the secreted. This chain is Pregnancy-specific beta-1-glycoprotein 2 (PSG2), found in Homo sapiens (Human).